Reading from the N-terminus, the 431-residue chain is Glutamate--tRNA ligase 1 (431 aa).

The 'HIGH' region motif lies at proline 11–glycine 21. Positions lysine 203–arginine 207 match the 'KMSKS' region motif. Lysine 206 provides a ligand contact to ATP.

Belongs to the class-I aminoacyl-tRNA synthetase family. Glutamate--tRNA ligase type 1 subfamily. In terms of assembly, monomer.

The protein resides in the cytoplasm. The enzyme catalyses tRNA(Glu) + L-glutamate + ATP = L-glutamyl-tRNA(Glu) + AMP + diphosphate. Functionally, catalyzes the attachment of glutamate to tRNA(Glu) in a two-step reaction: glutamate is first activated by ATP to form Glu-AMP and then transferred to the acceptor end of tRNA(Glu). The polypeptide is Glutamate--tRNA ligase 1 (Rubrobacter xylanophilus (strain DSM 9941 / JCM 11954 / NBRC 16129 / PRD-1)).